The primary structure comprises 402 residues: D-mannonate dehydratase (402 aa).

Asn-37 and His-122 together coordinate substrate. The active-site Proton donor/acceptor is Tyr-159. Asp-210 serves as a coordination point for Mg(2+). The Proton donor/acceptor role is filled by His-212. The Mg(2+) site is built by Glu-236 and Glu-262. The substrate site is built by Glu-262, Arg-283, His-312, Asp-316, and Glu-339.

This sequence belongs to the mandelate racemase/muconate lactonizing enzyme family. GalD subfamily. In terms of assembly, homotetramer. The cofactor is Mg(2+).

The catalysed reaction is D-mannonate = 2-dehydro-3-deoxy-D-gluconate + H2O. Its pathway is carbohydrate metabolism; pentose and glucuronate interconversion. Functionally, catalyzes the dehydration of D-mannonate. Has no detectable activity with a panel of 70 other acid sugars (in vitro). In Novosphingobium aromaticivorans (strain ATCC 700278 / DSM 12444 / CCUG 56034 / CIP 105152 / NBRC 16084 / F199), this protein is D-mannonate dehydratase (manD).